A 52-amino-acid polypeptide reads, in one-letter code: MSLRPCLTPSSMQYSDIYIPTPTPTHHTHTPTPHPHPHTHTHTHHNPNPTLF.

The tract at residues 1 to 52 is disordered; sequence MSLRPCLTPSSMQYSDIYIPTPTPTHHTHTPTPHPHPHTHTHTHHNPNPTLF. Residues 35–45 are compositionally biased toward basic residues; the sequence is PHPHTHTHTHH.

This is an uncharacterized protein from Saccharomyces cerevisiae (strain ATCC 204508 / S288c) (Baker's yeast).